We begin with the raw amino-acid sequence, 1163 residues long: DNA-directed RNA polymerase subunit beta' (1163 aa).

Zn(2+)-binding residues include C59, C61, C74, and C77. 3 residues coordinate Mg(2+): D449, D451, and D453. Residues C794, C868, C875, and C878 each contribute to the Zn(2+) site.

This sequence belongs to the RNA polymerase beta' chain family. In terms of assembly, the RNAP catalytic core consists of 2 alpha, 1 beta, 1 beta' and 1 omega subunit. When a sigma factor is associated with the core the holoenzyme is formed, which can initiate transcription. The cofactor is Mg(2+). Zn(2+) is required as a cofactor.

It catalyses the reaction RNA(n) + a ribonucleoside 5'-triphosphate = RNA(n+1) + diphosphate. Functionally, DNA-dependent RNA polymerase catalyzes the transcription of DNA into RNA using the four ribonucleoside triphosphates as substrates. The chain is DNA-directed RNA polymerase subunit beta' from Caldicellulosiruptor saccharolyticus (strain ATCC 43494 / DSM 8903 / Tp8T 6331).